The chain runs to 195 residues: Rubrerythrin (195 aa).

A Ferritin-like diiron domain is found at 1 to 150 (MKSLKGTKTA…KLAKNIEEGK (150 aa)). Positions 20, 53, 98, 101, 132, 135, 162, 165, 178, and 181 each coordinate Fe(3+). Residues 157 to 195 (VVLWKCGNCGFIWEGAEAPLKCPACLHPQAYFEVFKETY) enclose the Rubredoxin-like domain.

As to quaternary structure, homodimer. Possesses two rubredoxin-like centers and two non-sulfur oxo-bridged di-iron centers per dimer. Requires Fe(3+) as cofactor.

The protein localises to the cytoplasm. May provide oxidative stress protection via catalytic reduction of intracellular hydrogen peroxide. The protein is Rubrerythrin (rbr) of Clostridium perfringens (strain 13 / Type A).